Consider the following 324-residue polypeptide: Viral cathepsin (324 aa).

The N-terminal stretch at 1 to 16 is a signal peptide; it reads MNKIMLCLLVCGVVHA. Residues 17-113 constitute a propeptide, activation peptide; sequence ATYDLLKAPN…VILDRPPDRG (97 aa). Disulfide bonds link Cys-134–Cys-175, Cys-168–Cys-208, and Cys-263–Cys-311. Cys-137 is an active-site residue. Residue Asn-159 is glycosylated (N-linked (GlcNAc...) asparagine; by host). Active-site residues include His-270 and Asn-290.

This sequence belongs to the peptidase C1 family. In terms of processing, synthesized as an inactive proenzyme and activated by proteolytic removal of the inhibitory propeptide.

It catalyses the reaction Endopeptidase of broad specificity, hydrolyzing substrates of both cathepsin L and cathepsin B.. Functionally, cysteine protease that plays an essential role in host liquefaction to facilitate horizontal transmission of the virus. May participate in the degradation of foreign protein expressed by the baculovirus system. The polypeptide is Viral cathepsin (VCATH) (Orgyia pseudotsugata (Douglas-fir tussock moth)).